Reading from the N-terminus, the 159-residue chain is Ribosomal RNA large subunit methyltransferase H (159 aa).

S-adenosyl-L-methionine is bound by residues Leu-76 and Gly-108.

Belongs to the RNA methyltransferase RlmH family. As to quaternary structure, homodimer.

Its subcellular location is the cytoplasm. The catalysed reaction is pseudouridine(1915) in 23S rRNA + S-adenosyl-L-methionine = N(3)-methylpseudouridine(1915) in 23S rRNA + S-adenosyl-L-homocysteine + H(+). Specifically methylates the pseudouridine at position 1915 (m3Psi1915) in 23S rRNA. The chain is Ribosomal RNA large subunit methyltransferase H from Levilactobacillus brevis (strain ATCC 367 / BCRC 12310 / CIP 105137 / JCM 1170 / LMG 11437 / NCIMB 947 / NCTC 947) (Lactobacillus brevis).